Reading from the N-terminus, the 420-residue chain is Exodeoxyribonuclease 7 large subunit (420 aa).

It belongs to the XseA family. As to quaternary structure, heterooligomer composed of large and small subunits.

The protein resides in the cytoplasm. It catalyses the reaction Exonucleolytic cleavage in either 5'- to 3'- or 3'- to 5'-direction to yield nucleoside 5'-phosphates.. In terms of biological role, bidirectionally degrades single-stranded DNA into large acid-insoluble oligonucleotides, which are then degraded further into small acid-soluble oligonucleotides. This Helicobacter pylori (strain ATCC 700392 / 26695) (Campylobacter pylori) protein is Exodeoxyribonuclease 7 large subunit.